A 247-amino-acid chain; its full sequence is Cytochrome c oxidase subunit 2 (247 aa).

The Mitochondrial intermembrane segment spans residues 1 to 38; it reads MREMMMNNMLNDVPTPWAMYFQDSATPNMEGMMELHNN. The helical transmembrane segment at 39 to 55 threads the bilayer; sequence VLFYLCVMLGFVTYMLY. The Mitochondrial matrix portion of the chain corresponds to 56–86; the sequence is NVMTVYNKSAMAYKYMNHGQFMEMMWTTFPA. A helical transmembrane segment spans residues 87–103; the sequence is MMLLMMAFPSFMLLYMC. At 104 to 247 the chain is on the mitochondrial intermembrane side; that stretch reads DEVMAPAMTI…VDFLAWIDEQ (144 aa). Cu cation contacts are provided by His-182, Cys-217, Glu-219, Cys-221, His-225, and Met-228. Glu-219 is a Mg(2+) binding site.

It belongs to the cytochrome c oxidase subunit 2 family. In terms of assembly, component of the cytochrome c oxidase (complex IV, CIV), a multisubunit enzyme composed of a catalytic core of 3 subunits and several supernumerary subunits. The complex exists as a monomer or a dimer and forms supercomplexes (SCs) in the inner mitochondrial membrane with ubiquinol-cytochrome c oxidoreductase (cytochrome b-c1 complex, complex III, CIII). Requires Cu cation as cofactor.

It localises to the mitochondrion inner membrane. The catalysed reaction is 4 Fe(II)-[cytochrome c] + O2 + 8 H(+)(in) = 4 Fe(III)-[cytochrome c] + 2 H2O + 4 H(+)(out). Its function is as follows. Component of the cytochrome c oxidase, the last enzyme in the mitochondrial electron transport chain which drives oxidative phosphorylation. The respiratory chain contains 3 multisubunit complexes succinate dehydrogenase (complex II, CII), ubiquinol-cytochrome c oxidoreductase (cytochrome b-c1 complex, complex III, CIII) and cytochrome c oxidase (complex IV, CIV), that cooperate to transfer electrons derived from NADH and succinate to molecular oxygen, creating an electrochemical gradient over the inner membrane that drives transmembrane transport and the ATP synthase. Cytochrome c oxidase is the component of the respiratory chain that catalyzes the reduction of oxygen to water. Electrons originating from reduced cytochrome c in the intermembrane space (IMS) are transferred via the dinuclear copper A center (CU(A)) of subunit 2 and heme A of subunit 1 to the active site in subunit 1, a binuclear center (BNC) formed by heme A3 and copper B (CU(B)). The BNC reduces molecular oxygen to 2 water molecules using 4 electrons from cytochrome c in the IMS and 4 protons from the mitochondrial matrix. The protein is Cytochrome c oxidase subunit 2 (COX2) of Eeniella nana (Yeast).